The chain runs to 64 residues: Large ribosomal subunit protein bL35 (64 aa).

2 stretches are compositionally biased toward basic residues: residues 1 to 15 (MPKAKTHSGASKRFR) and 23 to 33 (VRQKANRRHLL). Residues 1–47 (MPKAKTHSGASKRFRTTGSGKIVRQKANRRHLLEHKPTSRTRRLDGR) form a disordered region. The segment covering 34–46 (EHKPTSRTRRLDG) has biased composition (basic and acidic residues).

Belongs to the bacterial ribosomal protein bL35 family.

This Mycobacteroides abscessus (strain ATCC 19977 / DSM 44196 / CCUG 20993 / CIP 104536 / JCM 13569 / NCTC 13031 / TMC 1543 / L948) (Mycobacterium abscessus) protein is Large ribosomal subunit protein bL35.